A 326-amino-acid chain; its full sequence is tRNA-modifying protein YgfZ (326 aa).

Residues Trp27 and Trp189 each contribute to the folate site.

This sequence belongs to the tRNA-modifying YgfZ family.

It localises to the cytoplasm. Its function is as follows. Folate-binding protein involved in regulating the level of ATP-DnaA and in the modification of some tRNAs. It is probably a key factor in regulatory networks that act via tRNA modification, such as initiation of chromosomal replication. The polypeptide is tRNA-modifying protein YgfZ (Escherichia coli O127:H6 (strain E2348/69 / EPEC)).